A 797-amino-acid polypeptide reads, in one-letter code: Plakophilin-3 (797 aa).

The disordered stretch occupies residues 58-81 (GQQSRHNGSAELDGSAESARGMPR). R81 carries the post-translational modification Omega-N-methylarginine. 3 positions are modified to phosphoserine: S123, S180, and S183. At Y195 the chain carries Phosphotyrosine. Positions 219 to 228 (ASSGSSRAGG) are enriched in low complexity. The tract at residues 219–241 (ASSGSSRAGGLDWPEATEGPPSR) is disordered. A Phosphoserine modification is found at S240. T250 carries the post-translational modification Phosphothreonine. Positions 253-274 (RFQSSHRSRGGTGSVSGAGLEP) are disordered. R261 carries the omega-N-methylarginine modification. The tract at residues 283 to 288 (SLSLSL) is required for interaction with SFN. Residues S285, S313, S314, and S331 each carry the phosphoserine modification. The interval 294–724 (LPDVRGLDSY…AEVLVNIIAV (431 aa)) is required for interaction with GSK3B. ARM repeat units follow at residues 305–348 (GHRT…HRCY), 351–390 (AAAK…NLIY), 393–432 (VDNK…NLSS), 449–487 (TDLV…NLSS), 491–536 (ATRQ…NLSY), 596–637 (PKGL…NITA), 645–684 (VLSR…NLSR), and 689–730 (KDEM…NLVV). Positions 516 to 797 (VGKCEDKSVE…GYRKEDFLGP (282 aa)) are required for binding to PKP2 mRNA.

The protein belongs to the beta-catenin family. Found in a complex composed of CDH1, RAP1A and PKP3; PKP3 acts as a scaffold protein within the complex, the complex is required for CDH1 localization to mature desmosome cell junctions. Interacts with FXR1; the interaction facilitates the binding of PKP3 to PKP2 mRNA. Interacts (via ARM repeats) with GSK3B; the interaction may be involved in PKP3 protein degradation. Interacts with hyperphosphorylated and hypophosphorylated RB1; the interaction inhibits RB1 interaction with and repression of the transcription factor E2F1, potentially via sequestering RB1 to the cytoplasm. Interacts with CDKN1A; the interaction sequesters CDKN1A to the cytoplasm thereby repressing its role as an inhibitor of CDK4- and CDK6-driven RB1 phosphorylation. Interacts (via N-terminus) with SFN; the interaction maintains the cytoplasmic pool of PKP3, facilitates PKP3 exchange at desmosomes and restricts PKP3 localization to existing desmosome cell junctions. Interacts (via N-terminus) with JUP; the interaction is required for PKP3 localization to desmosome cell-cell junctions. Phosphorylated at Ser-285 when localized to the cytoplasm, PKP3 at desmosome cell junctions is not phosphorylated. Phosphorylation at Try-195 by SRC is induced by reactive oxygen species and potentially acts as a release mechanism from desmosome cell-cell junctions. As to expression, expressed in all layers of the epidermis, but is most abundant in the basal layer (at protein level). Expressed in keratinocytes of the epidermis at birth (at protein level). Expressed in the anagen non-keratinized inner root sheath cuticle and hair cuticle (at protein level). Also expressed in the matrix, precursors of the inner root sheath and hair shaft lineages (at protein level). Expressed at apical membranes in the outer hair root sheath and basal layer keratinocytes (at protein level). Expressed in intestinal epithelial cells and lamina propria of the ileum (at protein level). Expressed in keratinocytes (at protein level).

It is found in the nucleus. It localises to the cell junction. The protein resides in the desmosome. The protein localises to the cytoplasm. Its subcellular location is the cell membrane. It is found in the adherens junction. Functionally, a component of desmosome cell-cell junctions which are required for positive regulation of cellular adhesion. Required for the localization of DSG2, DSP and PKP2 to mature desmosome junctions. May also play a role in the maintenance of DSG3 protein abundance in keratinocytes. Required for the formation of DSP-containing desmosome precursors in the cytoplasm during desmosome assembly. Also regulates the accumulation of CDH1 to mature desmosome junctions, via cAMP-dependent signaling and its interaction with activated RAP1A. Positively regulates the stabilization of PKP2 mRNA and therefore protein abundance, via its interaction with FXR1, may also regulate the protein abundance of DSP via the same mechanism. May also regulate the protein abundance of the desmosome component PKP1. Required for the organization of desmosome junctions at intercellular borders between basal keratinocytes of the epidermis, as a result plays a role in maintenance of the dermal barrier and regulation of the dermal inflammatory response. Required during epidermal keratinocyte differentiation for cell adherence at tricellular cell-cell contacts, via regulation of the timely formation of adherens junctions and desmosomes in a calcium-dependent manner, and may also play a role in the organization of the intracellular actin fiber belt. Acts as a negative regulator of the inflammatory response in hematopoietic cells of the skin and intestine, via modulation of proinflammatory cytokine production. Important for epithelial barrier maintenance in the intestine to reduce intestinal permeability, thereby plays a role in protection from intestinal-derived endotoxemia. Required for the development of hair follicles, via a role in the regulation of inner root sheaf length, correct alignment and anterior-posterior polarity of hair follicles. Promotes proliferation and cell-cycle G1/S phase transition of keratinocytes. Promotes E2F1-driven transcription of G1/S phase promoting genes by acting to release E2F1 from its inhibitory interaction with RB1, via sequestering RB1 and CDKN1A to the cytoplasm and thereby increasing CDK4- and CDK6-driven phosphorylation of RB1. May act as a scaffold protein to facilitate MAPK phosphorylation of RPS6KA protein family members and subsequently promote downstream EGFR signaling. May play a role in the positive regulation of transcription of Wnt-mediated TCF-responsive target genes. The polypeptide is Plakophilin-3 (Pkp3) (Mus musculus (Mouse)).